Consider the following 464-residue polypeptide: Argininosuccinate lyase (464 aa).

The protein belongs to the lyase 1 family. Argininosuccinate lyase subfamily.

The protein localises to the cytoplasm. The catalysed reaction is 2-(N(omega)-L-arginino)succinate = fumarate + L-arginine. The protein operates within amino-acid biosynthesis; L-arginine biosynthesis; L-arginine from L-ornithine and carbamoyl phosphate: step 3/3. This Desulfotalea psychrophila (strain LSv54 / DSM 12343) protein is Argininosuccinate lyase.